The primary structure comprises 538 residues: MNKPIKNIVIVGGGTAGWMAASYLVRALQQQANITLIESAAIPRIGVGEATIPSLQKVFFDFLGIPEREWMPQVNGAFKAAIKFVNWRKSPDPSRDDHFYHLFGNVPNCDGVPLTHYWLRKREQGFQQPMEYACYPQPGALDGKLAPCLSDGTRQMSHAWHFDAHLVADFLKRWAVERGVNRVVDEVVDVRLNNRGYISNLLTKEGRTLEADLFIDCSGMRGLLINQALKEPFIDMSDYLLCDSAVASAVPNDDARDGVEPYTSSIAMNSGWTWKIPMLGRFGSGYVFSSHFTSRDQATADFLKLWGLSDNQPLNQIKFRVGRNKRAWVNNCVSIGLSSCFLEPLESTGIYFIYAALYQLVKHFPDTSFDPRLSDAFNAEIVHMFDDCRDFVQAHYFTTSRDDTPFWLANRHDLRLSDAIKEKVQRYKAGLPLTTTSFDDSTYYETFDYEFKNFWLNGNYYCIFAGLGMLPDRSLPLLQHRPESIEKAEAMFASIRREAERLRTSLPTNYDYLRSLRDGDAGLSRGQRGPKLAAQESL.

8 residues coordinate FAD: glycine 13, threonine 15, alanine 16, serine 39, isoleucine 42, isoleucine 45, glutamate 49, and alanine 50. The active site involves lysine 79. Residue lysine 79 coordinates 7-chloro-L-tryptophan. The FAD site is built by valine 187 and leucine 337. Glutamate 346 is a binding site for 7-chloro-L-tryptophan. Residue glutamate 346 coordinates L-tryptophan. The chloride site is built by threonine 348 and glycine 349. Position 350 (isoleucine 350) interacts with FAD. Residues tyrosine 443, tyrosine 444, glutamate 450, and phenylalanine 454 each contribute to the 7-chloro-L-tryptophan site. L-tryptophan is bound by residues tyrosine 443, tyrosine 444, glutamate 450, and phenylalanine 454.

It belongs to the flavin-dependent halogenase family. Bacterial tryptophan halogenase subfamily. As to quaternary structure, homodimer.

The enzyme catalyses L-tryptophan + FADH2 + chloride + O2 = 7-chloro-L-tryptophan + FAD + 2 H2O. It participates in antibiotic biosynthesis. Functionally, involved in the biosynthesis of the antifungal antibiotic pyrrolnitrin. Catalyzes the chlorination of tryptophan (Trp) at C7 position to yield 7-chloro-L-tryptophan (7-CLT). The sequence is that of Tryptophan 7-halogenase PrnA from Pseudomonas fluorescens.